The primary structure comprises 513 residues: Activin receptor type-2A (513 aa).

Residues 1–19 form the signal peptide; that stretch reads MGAAAKLAFAVFLISCSSG. The Extracellular segment spans residues 20 to 135; it reads AILGRSETQE…TSNPVTPKPP (116 aa). 5 disulfides stabilise this stretch: Cys-30/Cys-60, Cys-50/Cys-78, Cys-85/Cys-104, Cys-91/Cys-103, and Cys-105/Cys-110. 2 N-linked (GlcNAc...) asparagine glycosylation sites follow: Asn-43 and Asn-66. A helical transmembrane segment spans residues 136-161; the sequence is YYNILLYSLVPLMLIAGIVICAFWVY. The Cytoplasmic segment spans residues 162-513; the sequence is RHHMMAYPPV…VDFPPKESSL (352 aa). The Protein kinase domain maps to 192–485; the sequence is LQLLEVKARG…GERITQMQRL (294 aa). ATP is bound by residues 198-206 and Lys-219; that span reads KARGRFGCV. Residue Asp-322 is the Proton acceptor of the active site.

It belongs to the protein kinase superfamily. TKL Ser/Thr protein kinase family. TGFB receptor subfamily. In terms of assembly, part of a complex consisting of MAGI2/ARIP1, ACVR2A, ACVR1B and SMAD3. Interacts with MAGI2/ARIP1. Interacts with type I receptor ACVR1. Interacts with BMP7. Interacts with TSC22D1/TSC-22. Interacts with activin A/INHBA. The cofactor is Mg(2+). It depends on Mn(2+) as a cofactor.

It localises to the cell membrane. The enzyme catalyses L-threonyl-[receptor-protein] + ATP = O-phospho-L-threonyl-[receptor-protein] + ADP + H(+). It carries out the reaction L-seryl-[receptor-protein] + ATP = O-phospho-L-seryl-[receptor-protein] + ADP + H(+). Its function is as follows. On ligand binding, forms a receptor complex consisting of two type II and two type I transmembrane serine/threonine kinases. Type II receptors phosphorylate and activate type I receptors which autophosphorylate, then bind and activate SMAD transcriptional regulators. Receptor for activin A, activin B and inhibin A. Mediates induction of adipogenesis by GDF6. The chain is Activin receptor type-2A from Rattus norvegicus (Rat).